The following is a 353-amino-acid chain: Phosphate acyltransferase (353 aa).

The protein belongs to the PlsX family. As to quaternary structure, homodimer. Probably interacts with PlsY.

The protein localises to the cytoplasm. The enzyme catalyses a fatty acyl-[ACP] + phosphate = an acyl phosphate + holo-[ACP]. The protein operates within lipid metabolism; phospholipid metabolism. Catalyzes the reversible formation of acyl-phosphate (acyl-PO(4)) from acyl-[acyl-carrier-protein] (acyl-ACP). This enzyme utilizes acyl-ACP as fatty acyl donor, but not acyl-CoA. In Nitrosospira multiformis (strain ATCC 25196 / NCIMB 11849 / C 71), this protein is Phosphate acyltransferase.